Here is a 365-residue protein sequence, read N- to C-terminus: Putative DNA-directed RNA polymerase subunit alpha-like 3 (365 aa).

Belongs to the RNA polymerase alpha chain family. In plastids the minimal PEP RNA polymerase catalytic core is composed of four subunits: alpha, beta, beta', and beta''. When a (nuclear-encoded) sigma factor is associated with the core the holoenzyme is formed, which can initiate transcription.

The protein localises to the plastid. Its subcellular location is the chloroplast. The catalysed reaction is RNA(n) + a ribonucleoside 5'-triphosphate = RNA(n+1) + diphosphate. In terms of biological role, DNA-dependent RNA polymerase catalyzes the transcription of DNA into RNA using the four ribonucleoside triphosphates as substrates. The protein is Putative DNA-directed RNA polymerase subunit alpha-like 3 (rpoAL3-A) of Pelargonium hortorum (Common geranium).